The sequence spans 226 residues: Chalcone--flavanone isomerase 2-A (226 aa).

Substrate is bound by residues threonine 49, asparagine 114, and serine 191.

This sequence belongs to the chalcone isomerase family. In terms of tissue distribution, mostly expressed in flowers, and, to a lower extent, in roots, shoots, and seeds.

It catalyses the reaction a chalcone = a flavanone.. It functions in the pathway secondary metabolite biosynthesis; flavonoid biosynthesis. Catalyzes the intramolecular cyclization of bicyclic chalcones into tricyclic (S)-flavanones. Responsible for the isomerization of 4,2',4',6'-tetrahydroxychalcone (also termed chalcone) into naringenin. This chain is Chalcone--flavanone isomerase 2-A (CHI2-A), found in Glycine max (Soybean).